Consider the following 1709-residue polypeptide: Protein SHORTAGE IN CHIASMATA 1 homolog (1709 aa).

Basic and acidic residues-rich tracts occupy residues 532–542 (PKLQDEDKHSD), 552–568 (DPQK…EGGT), and 1601–1613 (ESFR…DTPS). Disordered stretches follow at residues 532–586 (PKLQ…SSFP) and 1566–1662 (KRKA…DPTW).

Belongs to the XPF family. In terms of assembly, interacts (via C-terminus) with PTD. Interacts with ZIP4. Highly expressed in anthers and pistil during meiosis. Expressed in pollen mother cells (PMCs) during meiosis. Expressed at low levels in roots, shoots, leaves, flowers, and glumes.

It is found in the chromosome. The protein resides in the nucleus. Its subcellular location is the cytoplasm. The protein localises to the cell membrane. In terms of biological role, essential for normal crossover (CO) formation during meiosis. Essential component for the formation of class I meiotic COs. Interacts with PTD, another meiotic component, to regulate CO formation, possibly by stabilizing the recombination intermediates during meiosis. SHOC1 and PTD may form transient heterotrimeric or heterotetrameric complexes with HEI10 and/or ZIP4 to promote class I COs formation. Does not seem to be involved in early meiotic recombination steps involving double-strand break (DSB) formation, processing, and single-strand invasion. Does not seem to be involved in homologous pairing or synaptonemal complex (SC) assembly. The chain is Protein SHORTAGE IN CHIASMATA 1 homolog from Oryza sativa subsp. japonica (Rice).